Here is an 867-residue protein sequence, read N- to C-terminus: Protein translocase subunit SecA (867 aa).

Residues glutamine 86, glycine 104–threonine 108, and aspartate 499 contribute to the ATP site. Zn(2+) contacts are provided by cysteine 848, cysteine 850, cysteine 859, and histidine 860.

Belongs to the SecA family. Monomer and homodimer. Part of the essential Sec protein translocation apparatus which comprises SecA, SecYEG and auxiliary proteins SecDF-YajC and YidC. Requires Zn(2+) as cofactor.

Its subcellular location is the cell membrane. It is found in the cytoplasm. The enzyme catalyses ATP + H2O + cellular proteinSide 1 = ADP + phosphate + cellular proteinSide 2.. Part of the Sec protein translocase complex. Interacts with the SecYEG preprotein conducting channel. Has a central role in coupling the hydrolysis of ATP to the transfer of proteins into and across the cell membrane, serving both as a receptor for the preprotein-SecB complex and as an ATP-driven molecular motor driving the stepwise translocation of polypeptide chains across the membrane. The polypeptide is Protein translocase subunit SecA (Wolbachia sp. subsp. Brugia malayi (strain TRS)).